We begin with the raw amino-acid sequence, 104 residues long: Cell division topological specificity factor (104 aa).

It belongs to the MinE family.

Its function is as follows. Prevents the cell division inhibition by proteins MinC and MinD at internal division sites while permitting inhibition at polar sites. This ensures cell division at the proper site by restricting the formation of a division septum at the midpoint of the long axis of the cell. The protein is Cell division topological specificity factor of Sorangium cellulosum (strain So ce56) (Polyangium cellulosum (strain So ce56)).